The sequence spans 495 residues: SH2 domain-containing adapter protein E (495 aa).

Disordered regions lie at residues 51–190 (TVSE…DKGK), 203–233 (DYADPYDAKRTKGQRDAERVGENDGYMEPYD), and 256–327 (LLDS…EYEQ). Serine 107 bears the Phosphoserine mark. Polar residues predominate over residues 135–144 (TKSSGCSTYI). Basic and acidic residues predominate over residues 148-157 (IKVDTQEKNG). Residues 162–181 (PSSSSSSSSSSSSASSSPSS) show a composition bias toward low complexity. Composition is skewed to basic and acidic residues over residues 208–224 (YDAKRTKGQRDAERVGE) and 301–327 (PRAEGKARPPDSRLPENDERPAAEYEQ). The 96-residue stretch at 395-490 (WYHGAISRAE…AEHMTLLYPV (96 aa)) folds into the SH2 domain.

The polypeptide is SH2 domain-containing adapter protein E (SHE) (Homo sapiens (Human)).